The sequence spans 217 residues: Adenylate kinase (217 aa).

Gly-10–Thr-15 contributes to the ATP binding site. Residues Ser-30–Val-59 form an NMP region. AMP is bound by residues Thr-31, Arg-36, Ala-57 to Val-59, Gly-85 to Arg-88, and Gln-92. The segment at Gly-126–Asp-163 is LID. Arg-127 contributes to the ATP binding site. Cys-130, Cys-133, Cys-150, and Cys-153 together coordinate Zn(2+). 2 residues coordinate AMP: Arg-160 and Arg-171. Glu-199 lines the ATP pocket.

Belongs to the adenylate kinase family. In terms of assembly, monomer.

Its subcellular location is the cytoplasm. The enzyme catalyses AMP + ATP = 2 ADP. Its pathway is purine metabolism; AMP biosynthesis via salvage pathway; AMP from ADP: step 1/1. Functionally, catalyzes the reversible transfer of the terminal phosphate group between ATP and AMP. Plays an important role in cellular energy homeostasis and in adenine nucleotide metabolism. The chain is Adenylate kinase from Geobacter sulfurreducens (strain ATCC 51573 / DSM 12127 / PCA).